Here is a 245-residue protein sequence, read N- to C-terminus: Triosephosphate isomerase (245 aa).

4–6 provides a ligand contact to substrate; it reads NWK. His-91 serves as the catalytic Electrophile. Catalysis depends on Glu-161, which acts as the Proton acceptor. Residues Gly-167, Ser-207, and 228–229 each bind substrate; that span reads GG.

It belongs to the triosephosphate isomerase family. Homodimer.

The protein resides in the cytoplasm. The catalysed reaction is D-glyceraldehyde 3-phosphate = dihydroxyacetone phosphate. It functions in the pathway carbohydrate biosynthesis; gluconeogenesis. Its pathway is carbohydrate degradation; glycolysis; D-glyceraldehyde 3-phosphate from glycerone phosphate: step 1/1. Involved in the gluconeogenesis. Catalyzes stereospecifically the conversion of dihydroxyacetone phosphate (DHAP) to D-glyceraldehyde-3-phosphate (G3P). This chain is Triosephosphate isomerase, found in Chlorobaculum tepidum (strain ATCC 49652 / DSM 12025 / NBRC 103806 / TLS) (Chlorobium tepidum).